Here is a 497-residue protein sequence, read N- to C-terminus: Glutamyl-tRNA(Gln) amidotransferase subunit A (497 aa).

Residues Lys75 and Ser150 each act as charge relay system in the active site. The Acyl-ester intermediate role is filled by Ser174.

Belongs to the amidase family. GatA subfamily. In terms of assembly, heterotrimer of A, B and C subunits.

The enzyme catalyses L-glutamyl-tRNA(Gln) + L-glutamine + ATP + H2O = L-glutaminyl-tRNA(Gln) + L-glutamate + ADP + phosphate + H(+). In terms of biological role, allows the formation of correctly charged Gln-tRNA(Gln) through the transamidation of misacylated Glu-tRNA(Gln) in organisms which lack glutaminyl-tRNA synthetase. The reaction takes place in the presence of glutamine and ATP through an activated gamma-phospho-Glu-tRNA(Gln). This chain is Glutamyl-tRNA(Gln) amidotransferase subunit A, found in Paraburkholderia phymatum (strain DSM 17167 / CIP 108236 / LMG 21445 / STM815) (Burkholderia phymatum).